We begin with the raw amino-acid sequence, 154 residues long: MIEINVYYKKWYNVIRKPKSFVKNIINTSLIDLNIYEYKPIISIVLANNKLLQQLNYEYRKKNKPTNVLSFPYNKLDKNCYLGEIFISLDVLMNESVDLNIPIEHHTSHMLIHGLLHILDYDHEEPLDQYIMESIEIKLLDKLGIKNPYVSRET.

3 residues coordinate Zn(2+): H113, H117, and H123.

It belongs to the endoribonuclease YbeY family. The cofactor is Zn(2+).

It localises to the cytoplasm. Functionally, single strand-specific metallo-endoribonuclease involved in late-stage 70S ribosome quality control and in maturation of the 3' terminus of the 16S rRNA. In Ehrlichia canis (strain Jake), this protein is Endoribonuclease YbeY.